The primary structure comprises 265 residues: Indole-3-glycerol phosphate synthase (265 aa).

This sequence belongs to the TrpC family.

The catalysed reaction is 1-(2-carboxyphenylamino)-1-deoxy-D-ribulose 5-phosphate + H(+) = (1S,2R)-1-C-(indol-3-yl)glycerol 3-phosphate + CO2 + H2O. It participates in amino-acid biosynthesis; L-tryptophan biosynthesis; L-tryptophan from chorismate: step 4/5. The sequence is that of Indole-3-glycerol phosphate synthase from Desulforamulus reducens (strain ATCC BAA-1160 / DSM 100696 / MI-1) (Desulfotomaculum reducens).